The chain runs to 271 residues: 5-deoxy-glucuronate isomerase (271 aa).

It belongs to the isomerase IolB family.

It carries out the reaction 5-deoxy-D-glucuronate = 5-dehydro-2-deoxy-D-gluconate. Its pathway is polyol metabolism; myo-inositol degradation into acetyl-CoA; acetyl-CoA from myo-inositol: step 4/7. Involved in the isomerization of 5-deoxy-glucuronate (5DG) to 5-dehydro-2-deoxy-D-gluconate (DKG or 2-deoxy-5-keto-D-gluconate). In Bacillus subtilis subsp. natto, this protein is 5-deoxy-glucuronate isomerase.